The primary structure comprises 346 residues: tRNA N6-adenosine threonylcarbamoyltransferase (346 aa).

3 residues coordinate a divalent metal cation: His-117, His-121, and Tyr-138. Residues 138-142, Asp-170, Gly-185, and Asn-277 contribute to the substrate site; that span reads YVSGG. Asp-305 provides a ligand contact to a divalent metal cation.

Belongs to the KAE1 / TsaD family. As to quaternary structure, component of the EKC/KEOPS complex composed of at least SPAP27G11.07c/BUD32, cgi121, gon7, pgp2 and SPAC4H3.13/PCC1; the whole complex dimerizes. It depends on a divalent metal cation as a cofactor.

Its subcellular location is the cytoplasm. It is found in the nucleus. It carries out the reaction L-threonylcarbamoyladenylate + adenosine(37) in tRNA = N(6)-L-threonylcarbamoyladenosine(37) in tRNA + AMP + H(+). Its function is as follows. Component of the EKC/KEOPS complex that is required for the formation of a threonylcarbamoyl group on adenosine at position 37 (t(6)A37) in tRNAs that read codons beginning with adenine. The complex is probably involved in the transfer of the threonylcarbamoyl moiety of threonylcarbamoyl-AMP (TC-AMP) to the N6 group of A37. Pgp2 likely plays a direct catalytic role in this reaction, but requires other protein(s) of the complex to fulfill this activity. The EKC/KEOPS complex also promotes both telomere uncapping and telomere elongation. The complex is required for efficient recruitment of transcriptional coactivators. This is tRNA N6-adenosine threonylcarbamoyltransferase (pgp2) from Schizosaccharomyces pombe (strain 972 / ATCC 24843) (Fission yeast).